The sequence spans 722 residues: Probable ATP-dependent RNA helicase DDX4 (722 aa).

Residues 1–241 are disordered; the sequence is MGDEDWEAEI…GESSDTQGPK (241 aa). 2 stretches are compositionally biased toward basic and acidic residues: residues 21 to 35 and 66 to 78; these read FEKDGYSGENGDKFN and GKRDAGESNKREN. A compositionally biased stretch (gly residues) spans 150-162; that stretch reads RGSFRGCRGGFGL. Ser-220 and Ser-224 each carry phosphoserine. Residues 226 to 245 are interaction with RANBP9; sequence KSEAEGGESSDTQGPKVTYI. The Q motif motif lies at 286 to 314; that stretch reads LTFEEANLCQTLNNNIAKAGYTKLTPVQK. Residues 317–500 enclose the Helicase ATP-binding domain; it reads IPIILAGRDL…AEFLKSNYLF (184 aa). An ATP-binding site is contributed by 330 to 337; sequence AQTGSGKT. The short motif at 444-447 is the DEAD box element; that stretch reads DEAD. The region spanning 528 to 673 is the Helicase C-terminal domain; that stretch reads KLLEILRNIG…DVPAWLEEIA (146 aa). Polar residues predominate over residues 702 to 713; it reads LNTAGFSSSQAP. The tract at residues 702–722 is disordered; sequence LNTAGFSSSQAPNPVDDESWD. The residue at position 720 (Ser-720) is a Phosphoserine.

The protein belongs to the DEAD box helicase family. DDX4/VASA subfamily. As to quaternary structure, found in a mRNP complex, at least composed of TDRD1, TDRD6, TDRD7 and DDX4. Interacts with RANBP9. Interacts with RANBP10. Interacts with PIWIL2 and MAEL. Interacts with BMAL1 and CLOCK. Interacts with Tex19.1 and, probably, Tex19.2. Interacts with RBM46.

It localises to the cytoplasm. The protein localises to the perinuclear region. It carries out the reaction ATP + H2O = ADP + phosphate + H(+). Its function is as follows. ATP-dependent RNA helicase required during spermatogenesis to repress transposable elements and preventing their mobilization, which is essential for the germline integrity. Acts via the piRNA metabolic process, which mediates the repression of transposable elements during meiosis by forming complexes composed of piRNAs and Piwi proteins and governs the methylation and subsequent repression of transposons. Involved in the secondary piRNAs metabolic process, the production of piRNAs in fetal male germ cells through a ping-pong amplification cycle. Required for PIWIL2 slicing-triggered piRNA biogenesis: helicase activity enables utilization of one of the slice cleavage fragments generated by PIWIL2 and processing these pre-piRNAs into piRNAs. In Sus scrofa (Pig), this protein is Probable ATP-dependent RNA helicase DDX4 (DDX4).